The primary structure comprises 569 residues: Probable santalene synthase (569 aa).

(2E)-geranyl diphosphate-binding residues include Arg-284, Asp-321, Asp-325, Arg-460, and Asn-463. Residues Asp-321 and Asp-325 each coordinate Mg(2+). Residues 321–325 carry the DDXXD motif motif; sequence DDAYD. Mg(2+) contacts are provided by Asn-463, Thr-467, and Glu-471.

Belongs to the terpene synthase family. Tpsb subfamily. Mg(2+) is required as a cofactor. Mn(2+) serves as cofactor.

In terms of biological role, catalyzes the formation of santalene. The chain is Probable santalene synthase (SSY) from Santalum murrayanum (Bitter quandong).